The primary structure comprises 342 residues: Ribosomal RNA small subunit methyltransferase C (342 aa).

This sequence belongs to the methyltransferase superfamily. RsmC family. As to quaternary structure, monomer.

It is found in the cytoplasm. It carries out the reaction guanosine(1207) in 16S rRNA + S-adenosyl-L-methionine = N(2)-methylguanosine(1207) in 16S rRNA + S-adenosyl-L-homocysteine + H(+). Its function is as follows. Specifically methylates the guanine in position 1207 of 16S rRNA in the 30S particle. The polypeptide is Ribosomal RNA small subunit methyltransferase C (Salmonella arizonae (strain ATCC BAA-731 / CDC346-86 / RSK2980)).